The sequence spans 313 residues: Testis-expressed protein 264 (313 aa).

Residues 1-6 (MSDLLL) lie on the Lumenal side of the membrane. The chain crosses the membrane as a helical; Signal-anchor for type III membrane protein span at residues 7-31 (LGLIGGLTLLLLLTLLAFAGYSGLL). Over 32–313 (AGVEVSAGSP…EPTAPEKGKE (282 aa)) the chain is Cytoplasmic. The tract at residues 193 to 313 (PEMKETEWKW…EPTAPEKGKE (121 aa)) is disordered. Positions 219–247 (DTMSDTSSVSLEVSPGSRETSAATLSPGA) are enriched in polar residues. Phosphoserine is present on residues S239 and S244. Positions 251 to 263 (GWDDGDTRSEHSY) are enriched in basic and acidic residues. Low complexity predominate over residues 264–273 (SESGASGSSF). The short motif at 273 to 276 (FEEL) is the LIR motif element.

Interacts (via the LIR motif) with ATG8 family proteins MAP1LC3A, MAP1LC3B, GABARAP and GABARAPL1. Interacts with VCP/p97; bridging VCP/p97 to covalent DNA-protein cross-links (DPCs). Interacts with TOP1 (when sumoylated).

It is found in the endoplasmic reticulum membrane. It localises to the cytoplasmic vesicle. The protein localises to the autophagosome. Its subcellular location is the cytoplasm. The protein resides in the cytosol. It is found in the nucleus. It localises to the chromosome. In terms of biological role, major reticulophagy (also called ER-phagy) receptor that acts independently of other candidate reticulophagy receptors to remodel subdomains of the endoplasmic reticulum into autophagosomes upon nutrient stress, which then fuse with lysosomes for endoplasmic reticulum turnover. The ATG8-containing isolation membrane (IM) cradles a tubular segment of TEX264-positive ER near a three-way junction, allowing the formation of a synapse of 2 juxtaposed membranes with trans interaction between the TEX264 and ATG8 proteins. Expansion of the IM would extend the capture of ER, possibly through a 'zipper-like' process involving continued trans TEX264-ATG8 interactions, until poorly understood mechanisms lead to the fission of relevant membranes and, ultimately, autophagosomal membrane closure. Also involved in the repair of covalent DNA-protein cross-links (DPCs) during DNA synthesis: acts by bridging VCP/p97 to covalent DNA-protein cross-links (DPCs) and initiating resolution of DPCs by SPRTN. This chain is Testis-expressed protein 264, found in Homo sapiens (Human).